The chain runs to 999 residues: Sarcoplasmic/endoplasmic reticulum calcium ATPase 3 (999 aa).

N-acetylmethionine is present on Met-1. The Cytoplasmic portion of the chain corresponds to 1-48; it reads MEAAHLLPAADVLRHFSVTAEGGLSPAQVTGARERYGPNELPSEEGKS. Ser-17 is modified (phosphoserine). Phosphothreonine is present on Thr-19. Ser-25 carries the post-translational modification Phosphoserine. A helical membrane pass occupies residues 49–69; the sequence is LWELVLEQFEDLLVRILLLAA. Residues 70–89 are Lumenal-facing; that stretch reads LVSFVLAWFEEGEETTTAFV. Residues 90 to 110 traverse the membrane as a helical segment; it reads EPLVIMLILVANAIVGVWQER. Residues 111-253 are Cytoplasmic-facing; that stretch reads NAESAIEALK…PERTPLQRKL (143 aa). The chain crosses the membrane as a helical span at residues 254–273; sequence DEFGRQLSHAISVICVAVWV. Residues 274 to 295 are Lumenal-facing; that stretch reads INIGHFADPAHGGSWLRGAVYY. A helical membrane pass occupies residues 296 to 313; it reads FKIAVALAVAAIPEGLPA. The Ca(2+) site is built by Val-304, Ala-305, Ile-307, and Glu-309. The Cytoplasmic segment spans residues 314–757; sequence VITTCLALGT…EEGRAIYSNM (444 aa). Asp-351 functions as the 4-aspartylphosphate intermediate in the catalytic mechanism. The Mg(2+) site is built by Asp-351 and Thr-353. Residue Thr-353 participates in ATP binding. Residues 370-400 form an interaction with phospholamban 1 region; it reads AEADAGSCLLHEFTISGTTYTPEGEVRQGDQ. Thr-415 is subject to Phosphothreonine. ATP is bound by residues Glu-442, Arg-489, Lys-515, Arg-560, Thr-625, Gly-626, and Asp-627. Ser-662 carries the post-translational modification Phosphoserine. ATP-binding residues include Arg-678 and Lys-684. Mg(2+) is bound at residue Asp-703. ATP is bound at residue Asn-706. A helical transmembrane segment spans residues 758-777; the sequence is KQFIRYLISSNVGEVVCIFL. 2 residues coordinate Ca(2+): Asn-768 and Glu-771. Topologically, residues 778–787 are lumenal; sequence TAILGLPEAL. The chain crosses the membrane as a helical span at residues 788–808; the sequence is IPVQLLWVNLVTDGLPATALG. The interaction with phospholamban 2 stretch occupies residues 788–808; it reads IPVQLLWVNLVTDGLPATALG. Positions 796, 799, and 800 each coordinate Ca(2+). At 809-828 the chain is on the cytoplasmic side; that stretch reads FNPPDLDIMEKLPRSPREAL. Residues 829–851 form a helical membrane-spanning segment; it reads ISGWLFFRYLAIGVYVGLATVAA. The Lumenal portion of the chain corresponds to 852–897; the sequence is ATWWFVYDAEGPHINFYQLRNFLKCSEDNPLFAGIDCEVFESRFPT. A helical membrane pass occupies residues 898–917; the sequence is TMALSVLVTIEMCNALNSVS. Position 908 (Glu-908) interacts with Ca(2+). At 918 to 930 the chain is on the cytoplasmic side; sequence ENQSLLRMPPWMN. Residues 931-949 traverse the membrane as a helical segment; the sequence is PWLLVAVAMSMALHFLILL. Topologically, residues 950-964 are lumenal; that stretch reads VPPLPLIFQVTPLSG. A helical transmembrane segment spans residues 965 to 985; sequence RQWVVVLQISLPVILLDEALK. At 986–999 the chain is on the cytoplasmic side; that stretch reads YLSRNHMHEEMSQK.

The protein belongs to the cation transport ATPase (P-type) (TC 3.A.3) family. Type IIA subfamily. In terms of assembly, interacts with sarcolipin (SLN). Interacts with phospholamban (PLN). Interacts with myoregulin (MRLN). Interacts with DWORF. Interacts with VMP1. Interacts with TUNAR; the interaction occurs at low levels in low glucose conditions and is increased by high glucose levels. The cofactor is Mg(2+). As to expression, found in most tissues. Most abundant in thymus, trachea, salivary gland, spleen, bone marrow, lymph node, peripheral leukocytes, pancreas and colon. Also detected in fetal tissues. Expressed in cell lineages of hematopoietic, epithelial, or embryonic origin and also expressed in several cancer cell lines.

Its subcellular location is the nucleus membrane. The protein localises to the endoplasmic reticulum membrane. It is found in the sarcoplasmic reticulum membrane. It carries out the reaction Ca(2+)(in) + ATP + H2O = Ca(2+)(out) + ADP + phosphate + H(+). With respect to regulation, inhibited by sarcolipin (SLN), phospholamban (PLN) and myoregulin (MRLN). Enhanced by DWORF; DWORF increases activity by displacing sarcolipin (SLN), phospholamban (PLN) and myoregulin (MRLN). Functionally, this magnesium-dependent enzyme catalyzes the hydrolysis of ATP coupled with the transport of calcium. Transports calcium ions from the cytosol into the sarcoplasmic/endoplasmic reticulum lumen. Contributes to calcium sequestration involved in muscular excitation/contraction. The protein is Sarcoplasmic/endoplasmic reticulum calcium ATPase 3 of Homo sapiens (Human).